The chain runs to 277 residues: Large ribosomal subunit protein uL2 (277 aa).

Disordered stretches follow at residues 37–60 (KNSTAGRNNNGHITTRHKGGGHKH) and 223–265 (VVMN…KRTD). Residues 39 to 49 (STAGRNNNGHI) show a composition bias toward polar residues. Over residues 50-60 (TTRHKGGGHKH) the composition is skewed to basic residues. Residues 229–244 (DHPHGGGEGRTGEARE) are compositionally biased toward basic and acidic residues.

It belongs to the universal ribosomal protein uL2 family. As to quaternary structure, part of the 50S ribosomal subunit. Forms a bridge to the 30S subunit in the 70S ribosome.

One of the primary rRNA binding proteins. Required for association of the 30S and 50S subunits to form the 70S ribosome, for tRNA binding and peptide bond formation. It has been suggested to have peptidyltransferase activity; this is somewhat controversial. Makes several contacts with the 16S rRNA in the 70S ribosome. In Neisseria meningitidis serogroup A / serotype 4A (strain DSM 15465 / Z2491), this protein is Large ribosomal subunit protein uL2.